A 202-amino-acid chain; its full sequence is MITIGITGGIGSGKSVVSRILLTLGIPVYDSDSRAKWLNDHSPVVRQALTGLIGSDLYENGILRRDRLAAAIFSSGDLLEQVNGIIHPEVKKDFCQWRSECESDLCAIESAILFSSGFNSLCDTVIRVDAPEKIRQERAMARDGSSAETMRQRMLSQEREQSLAKAGADHTVLNAPPHLLVPQVVRIIETVRTKRPNPPDRL.

Positions Thr-3–Leu-202 constitute a DPCK domain. Gly-11–Val-16 provides a ligand contact to ATP. The disordered stretch occupies residues Arg-138–Gln-161.

It belongs to the CoaE family.

Its subcellular location is the cytoplasm. It carries out the reaction 3'-dephospho-CoA + ATP = ADP + CoA + H(+). Its pathway is cofactor biosynthesis; coenzyme A biosynthesis; CoA from (R)-pantothenate: step 5/5. Functionally, catalyzes the phosphorylation of the 3'-hydroxyl group of dephosphocoenzyme A to form coenzyme A. This chain is Dephospho-CoA kinase, found in Porphyromonas gingivalis (strain ATCC BAA-308 / W83).